We begin with the raw amino-acid sequence, 102 residues long: Large ribosomal subunit protein uL24 (102 aa).

The protein belongs to the universal ribosomal protein uL24 family. As to quaternary structure, part of the 50S ribosomal subunit.

Its function is as follows. One of two assembly initiator proteins, it binds directly to the 5'-end of the 23S rRNA, where it nucleates assembly of the 50S subunit. In terms of biological role, one of the proteins that surrounds the polypeptide exit tunnel on the outside of the subunit. This is Large ribosomal subunit protein uL24 from Ralstonia pickettii (strain 12J).